A 318-amino-acid polypeptide reads, in one-letter code: Acetylglutamate kinase (318 aa).

Residues 80–81 (GG), R102, and N203 each bind substrate.

The protein belongs to the acetylglutamate kinase family. ArgB subfamily.

Its subcellular location is the cytoplasm. It carries out the reaction N-acetyl-L-glutamate + ATP = N-acetyl-L-glutamyl 5-phosphate + ADP. It participates in amino-acid biosynthesis; L-arginine biosynthesis; N(2)-acetyl-L-ornithine from L-glutamate: step 2/4. In terms of biological role, catalyzes the ATP-dependent phosphorylation of N-acetyl-L-glutamate. The chain is Acetylglutamate kinase from Bifidobacterium adolescentis (strain ATCC 15703 / DSM 20083 / NCTC 11814 / E194a).